Here is a 247-residue protein sequence, read N- to C-terminus: 23S rRNA (guanosine-2'-O-)-methyltransferase RlmB (247 aa).

Positions 197, 217, and 226 each coordinate S-adenosyl-L-methionine.

Belongs to the class IV-like SAM-binding methyltransferase superfamily. RNA methyltransferase TrmH family. RlmB subfamily.

It localises to the cytoplasm. The enzyme catalyses guanosine(2251) in 23S rRNA + S-adenosyl-L-methionine = 2'-O-methylguanosine(2251) in 23S rRNA + S-adenosyl-L-homocysteine + H(+). Functionally, specifically methylates the ribose of guanosine 2251 in 23S rRNA. The sequence is that of 23S rRNA (guanosine-2'-O-)-methyltransferase RlmB from Vibrio parahaemolyticus serotype O3:K6 (strain RIMD 2210633).